The following is a 345-amino-acid chain: Transcription factor MYB106 (345 aa).

HTH myb-type domains lie at 9–61 (KAGL…TNYL) and 62–116 (RPDI…KKRL). 2 DNA-binding regions (H-T-H motif) span residues 37-61 (WRSLPEKAGLQRCGKSCRLRWTNYL) and 89-112 (WSAIATHLPKRTDNEIKNYWNTHL).

In terms of tissue distribution, expressed in trichomes, stems, carpels, petals and stamens.

The protein localises to the nucleus. Functions as a repressor of epidermal cell outgrowth and negatively regulate trichome branch formation. Acts both as a positive and a negative regulator of cellular outgrowth. Promotes both trichome expansion and branch formation. Coordinately with WIN1/SHN1, participates in the regulation of cuticle biosynthesis and wax accumulation in reproductive organs and trichomes. Functions in cuticle nanoridge formation in petals and stamens, and in morphogenesis of petal conical cells and trichomes. May play a role in the regulation of cuticle formation in vegetative organs. The polypeptide is Transcription factor MYB106 (Arabidopsis thaliana (Mouse-ear cress)).